Consider the following 169-residue polypeptide: Peptide deformylase 1 (169 aa).

Residues Cys93 and His135 each coordinate Fe cation. Glu136 is an active-site residue. A Fe cation-binding site is contributed by His139.

Belongs to the polypeptide deformylase family. It depends on Fe(2+) as a cofactor.

The enzyme catalyses N-terminal N-formyl-L-methionyl-[peptide] + H2O = N-terminal L-methionyl-[peptide] + formate. Its function is as follows. Removes the formyl group from the N-terminal Met of newly synthesized proteins. Requires at least a dipeptide for an efficient rate of reaction. N-terminal L-methionine is a prerequisite for activity but the enzyme has broad specificity at other positions. This is Peptide deformylase 1 from Corynebacterium glutamicum (strain ATCC 13032 / DSM 20300 / JCM 1318 / BCRC 11384 / CCUG 27702 / LMG 3730 / NBRC 12168 / NCIMB 10025 / NRRL B-2784 / 534).